The sequence spans 538 residues: Atos homolog protein B (538 aa).

Disordered regions lie at residues 1–103 (MRHV…GLVS), 130–149 (GSAT…PSSN), 163–185 (PDQG…QLHT), and 199–272 (KSPV…LGCP). A compositionally biased stretch (low complexity) spans 130–148 (GSATSSWTSGTQSTPWPSS). Residues 227–238 (HTPPGPGPPGPC) are compositionally biased toward pro residues. Residues serine 254 and serine 255 each carry the phosphoserine modification. The required for macropage invasion stretch occupies residues 348–430 (LLGNFEESLL…VPKVGTIQVT (83 aa)). The transactivation domain 1 (TAD1) stretch occupies residues 436-444 (QTVVKMFLV).

The protein belongs to the ATOS family.

The protein localises to the nucleus. Transcription regulator that may syncronize transcriptional and translational programs. This Rattus norvegicus (Rat) protein is Atos homolog protein B.